Here is a 152-residue protein sequence, read N- to C-terminus: MQLTELIETTVVGLGYELVDLERTGRGMLCIYIDQPAGIAIEDCEKVTRQLQHVLTVENIDYERLEVSSPGLDRPLKKLADFERFAGSEVVITLKKPLDGRKSYRGILHAPQGETIGLEFEGKEGAAMLDFTLADMDKARLVPKVDFRSRKQ.

The protein belongs to the RimP family.

The protein resides in the cytoplasm. Required for maturation of 30S ribosomal subunits. This chain is Ribosome maturation factor RimP, found in Paraburkholderia xenovorans (strain LB400).